A 189-amino-acid chain; its full sequence is 3-hydroxyanthranilate 3,4-dioxygenase (189 aa).

Arginine 46 provides a ligand contact to O2. Histidine 50, glutamate 56, and histidine 94 together coordinate Fe cation. Glutamate 56 is a binding site for substrate. Substrate contacts are provided by arginine 98 and glutamate 109. Fe cation is bound by residues cysteine 124, cysteine 127, cysteine 161, and cysteine 164.

The protein belongs to the 3-HAO family. As to quaternary structure, homodimer. It depends on Fe(2+) as a cofactor.

The catalysed reaction is 3-hydroxyanthranilate + O2 = (2Z,4Z)-2-amino-3-carboxymuconate 6-semialdehyde. The protein operates within cofactor biosynthesis; NAD(+) biosynthesis; quinolinate from L-kynurenine: step 3/3. In terms of biological role, catalyzes the oxidative ring opening of 3-hydroxyanthranilate to 2-amino-3-carboxymuconate semialdehyde, which spontaneously cyclizes to quinolinate. In Shewanella woodyi (strain ATCC 51908 / MS32), this protein is 3-hydroxyanthranilate 3,4-dioxygenase.